The chain runs to 237 residues: Ribosomal RNA small subunit methyltransferase G (237 aa).

S-adenosyl-L-methionine-binding positions include Gly78, Phe83, 129 to 130 (AE), and Arg148.

Belongs to the methyltransferase superfamily. RNA methyltransferase RsmG family.

The protein resides in the cytoplasm. Specifically methylates the N7 position of a guanine in 16S rRNA. The polypeptide is Ribosomal RNA small subunit methyltransferase G (Streptococcus pyogenes serotype M1).